The following is a 53-amino-acid chain: Toxin CjTL7 (53 aa).

Positions 1-22 are cleaved as a signal peptide; sequence MMIKVLLLLSSALVLFTPEAEG. W51 carries the post-translational modification Tryptophan amide.

In terms of processing, contains 4 disulfide bonds.

The protein resides in the secreted. The protein localises to the nematocyst. Its function is as follows. In vivo, only causes a weak change in behavior in shrimps (C.multidentata) (slight twitching of the walking legs), but no lethal effect is observed. No activity is observed when injected into fly larvae (M.domestica). The protein is Toxin CjTL7 of Epiactis japonica (Sea anemone).